Here is a 393-residue protein sequence, read N- to C-terminus: RNA pseudouridine synthase 7 (393 aa).

An S4 RNA-binding domain is found at 49–118; it reads KTIVDLFTDE…GDITILQNEA (70 aa). Asp-162 is a catalytic residue.

The protein belongs to the pseudouridine synthase RluA family.

It catalyses the reaction a uridine in RNA = a pseudouridine in RNA. In Oryza sativa subsp. japonica (Rice), this protein is RNA pseudouridine synthase 7.